A 456-amino-acid polypeptide reads, in one-letter code: Major facilitator superfamily domain-containing protein 10 (456 aa).

The next 11 helical transmembrane spans lie at 25–45 (VVAVVFLGLLLDLLAFTLLLP), 87–107 (VLFGGLIGSVFSLLQFLSAPL), 125–145 (LAGVATSYAVWAASKSFAAFL), 149–169 (VIGGISKGNVSLCTAIVADLG), 179–199 (AVIGVAFSLGFTLGPTLGAFL), 204–224 (VPWLALLFAVSDLLFIWCFLP), 278–298 (LVYFLYLFLFSGLEFTLSFLV), 311–328 (KMFFFIGLTMATIQGAYA), 343–363 (AILLLIPASLFVGWGHTLPIL), 365–385 (LGLLLYSWAAAVVVPCLSSVV), and 422–442 (LAGARVCYTVCAALFLLPFSI).

It belongs to the major facilitator superfamily.

It localises to the nucleus inner membrane. It is found in the cell membrane. In terms of biological role, probable organic anion transporter which may serve as a transporter for some non-steroidal anti-inflammatory drugs (NSAIDs) as well as other organic anions across the luminal membranes of renal proximal tubules at the final excretion step into the urine. The chain is Major facilitator superfamily domain-containing protein 10 (MFSD10) from Bos taurus (Bovine).